The sequence spans 509 residues: Pyruvate kinase (509 aa).

Phosphoserine is present on Ser-29. Arg-56 lines the substrate pocket. Residues Asn-58 and Ser-60 each contribute to the K(+) site. Residue 58 to 61 coordinates ATP; the sequence is NFSH. Phosphoserine is present on Ser-63. Residues Asp-91 and Thr-92 each coordinate K(+). Positions 98 and 184 each coordinate ATP. Glu-249 serves as a coordination point for Mg(2+). Substrate is bound by residues Gly-272 and Asp-273. Mg(2+) is bound at residue Asp-273. Ser-281 is subject to Phosphoserine. Thr-305 provides a ligand contact to substrate. The residue at position 412 (Ser-412) is a Phosphoserine.

It belongs to the pyruvate kinase family. In terms of assembly, homotetramer. Mg(2+) serves as cofactor. K(+) is required as a cofactor.

It carries out the reaction pyruvate + ATP = phosphoenolpyruvate + ADP + H(+). It participates in carbohydrate degradation; glycolysis; pyruvate from D-glyceraldehyde 3-phosphate: step 5/5. The protein is Pyruvate kinase (pyk1) of Schizosaccharomyces pombe (strain 972 / ATCC 24843) (Fission yeast).